Reading from the N-terminus, the 142-residue chain is Midkine (142 aa).

A signal peptide spans 1-21; the sequence is MQPRGLLLLLALLLLAAAAEA. 5 disulfides stabilise this stretch: C36-C60, C44-C69, C51-C73, C83-C115, and C93-C125.

This sequence belongs to the pleiotrophin family.

The protein resides in the cell surface. It localises to the secreted. The protein localises to the extracellular space. It is found in the extracellular matrix. Its subcellular location is the basement membrane. In terms of biological role, has mitogenic activity, and neurite extension activity for PC12 cells. This is Midkine (RIHB) from Gallus gallus (Chicken).